A 70-amino-acid chain; its full sequence is Large ribosomal subunit protein bL31 (70 aa).

Zn(2+)-binding residues include C16, C18, C37, and C40.

The protein belongs to the bacterial ribosomal protein bL31 family. Type A subfamily. In terms of assembly, part of the 50S ribosomal subunit. Zn(2+) serves as cofactor.

Its function is as follows. Binds the 23S rRNA. The sequence is that of Large ribosomal subunit protein bL31 from Alteromonas mediterranea (strain DSM 17117 / CIP 110805 / LMG 28347 / Deep ecotype).